The primary structure comprises 594 residues: Microtubule-associated protein VP8 (594 aa).

The protein resides in the virion. It is found in the host cytoplasm. Its subcellular location is the host cytoskeleton. In terms of biological role, minor inner capsid component. Displays NTPase and RNA 5'-triphosphatase (RTPase) activities. May function as a cofactor of polymerase VP1. Associates with microtubules and plays a role in the formation, structural organization and morphology of viral inclusions, where the assembly of cores and the replication of viral RNA occur. The sequence is that of Microtubule-associated protein VP8 (S8) from Saccharum officinarum (Sugarcane).